We begin with the raw amino-acid sequence, 254 residues long: 5'-nucleotidase SurE (254 aa).

Asp8, Asp9, Ser40, and Asn93 together coordinate a divalent metal cation.

The protein belongs to the SurE nucleotidase family. It depends on a divalent metal cation as a cofactor.

Its subcellular location is the cytoplasm. The enzyme catalyses a ribonucleoside 5'-phosphate + H2O = a ribonucleoside + phosphate. In terms of biological role, nucleotidase that shows phosphatase activity on nucleoside 5'-monophosphates. In Methylorubrum populi (strain ATCC BAA-705 / NCIMB 13946 / BJ001) (Methylobacterium populi), this protein is 5'-nucleotidase SurE.